The primary structure comprises 105 residues: Large ribosomal subunit protein uL24 (105 aa).

It belongs to the universal ribosomal protein uL24 family. As to quaternary structure, part of the 50S ribosomal subunit.

In terms of biological role, one of two assembly initiator proteins, it binds directly to the 5'-end of the 23S rRNA, where it nucleates assembly of the 50S subunit. Functionally, one of the proteins that surrounds the polypeptide exit tunnel on the outside of the subunit. The polypeptide is Large ribosomal subunit protein uL24 (Mycobacterium leprae (strain Br4923)).